The chain runs to 223 residues: Triosephosphate isomerase (223 aa).

Substrate is bound at residue 6–8; it reads NLK. The active-site Electrophile is His-86. Glu-151 (proton acceptor) is an active-site residue. Gly-157 and Ser-187 together coordinate substrate.

It belongs to the triosephosphate isomerase family. In terms of assembly, homodimer.

The protein localises to the cytoplasm. It carries out the reaction D-glyceraldehyde 3-phosphate = dihydroxyacetone phosphate. Its pathway is carbohydrate biosynthesis; gluconeogenesis. The protein operates within carbohydrate degradation; glycolysis; D-glyceraldehyde 3-phosphate from glycerone phosphate: step 1/1. Involved in the gluconeogenesis. Catalyzes stereospecifically the conversion of dihydroxyacetone phosphate (DHAP) to D-glyceraldehyde-3-phosphate (G3P). In Campylobacter jejuni subsp. jejuni serotype O:2 (strain ATCC 700819 / NCTC 11168), this protein is Triosephosphate isomerase.